A 436-amino-acid polypeptide reads, in one-letter code: Enolase (436 aa).

Residues His159 and Glu168 each contribute to the substrate site. Glu211 functions as the Proton donor in the catalytic mechanism. Positions 246, 295, and 322 each coordinate Mg(2+). Positions 295 and 322 each coordinate substrate. Lys347 acts as the Proton acceptor in catalysis. Substrate-binding positions include 374–377 (SHRS) and Lys398.

Belongs to the enolase family. Homodimer. Mg(2+) serves as cofactor.

The protein resides in the cytoplasm. It carries out the reaction (2R)-2-phosphoglycerate = phosphoenolpyruvate + H2O. Its pathway is carbohydrate degradation; glycolysis; pyruvate from D-glyceraldehyde 3-phosphate: step 4/5. The protein is Enolase of Neocallimastix frontalis (Rumen fungus).